Reading from the N-terminus, the 95-residue chain is Aspartyl/glutamyl-tRNA(Asn/Gln) amidotransferase subunit C (95 aa).

The protein belongs to the GatC family. In terms of assembly, heterotrimer of A, B and C subunits.

The catalysed reaction is L-glutamyl-tRNA(Gln) + L-glutamine + ATP + H2O = L-glutaminyl-tRNA(Gln) + L-glutamate + ADP + phosphate + H(+). The enzyme catalyses L-aspartyl-tRNA(Asn) + L-glutamine + ATP + H2O = L-asparaginyl-tRNA(Asn) + L-glutamate + ADP + phosphate + 2 H(+). Functionally, allows the formation of correctly charged Asn-tRNA(Asn) or Gln-tRNA(Gln) through the transamidation of misacylated Asp-tRNA(Asn) or Glu-tRNA(Gln) in organisms which lack either or both of asparaginyl-tRNA or glutaminyl-tRNA synthetases. The reaction takes place in the presence of glutamine and ATP through an activated phospho-Asp-tRNA(Asn) or phospho-Glu-tRNA(Gln). The chain is Aspartyl/glutamyl-tRNA(Asn/Gln) amidotransferase subunit C from Geotalea uraniireducens (strain Rf4) (Geobacter uraniireducens).